Reading from the N-terminus, the 127-residue chain is Major sperm protein 10/36/56/76 (127 aa).

Ala-2 bears the N-acetylalanine mark. Positions 9–126 (DIQTQPNAKI…RRKNLPIEYN (118 aa)) constitute an MSP domain.

In terms of tissue distribution, sperm.

It localises to the cell projection. The protein resides in the pseudopodium. The protein localises to the cytoplasm. It is found in the cytoskeleton. Functionally, central component in molecular interactions underlying sperm crawling. Forms an extensive filament system that extends from sperm villipoda, along the leading edge of the pseudopod. This Caenorhabditis elegans protein is Major sperm protein 10/36/56/76 (msp-10).